The following is a 325-amino-acid chain: ATP phosphoribosyltransferase (325 aa).

Belongs to the ATP phosphoribosyltransferase family. Long subfamily. It depends on Mg(2+) as a cofactor.

The protein resides in the cytoplasm. It carries out the reaction 1-(5-phospho-beta-D-ribosyl)-ATP + diphosphate = 5-phospho-alpha-D-ribose 1-diphosphate + ATP. Its pathway is amino-acid biosynthesis; L-histidine biosynthesis; L-histidine from 5-phospho-alpha-D-ribose 1-diphosphate: step 1/9. Feedback inhibited by histidine. Catalyzes the condensation of ATP and 5-phosphoribose 1-diphosphate to form N'-(5'-phosphoribosyl)-ATP (PR-ATP). Has a crucial role in the pathway because the rate of histidine biosynthesis seems to be controlled primarily by regulation of HisG enzymatic activity. The chain is ATP phosphoribosyltransferase from Bradyrhizobium diazoefficiens (strain JCM 10833 / BCRC 13528 / IAM 13628 / NBRC 14792 / USDA 110).